A 227-amino-acid chain; its full sequence is Ribose-5-phosphate isomerase A (227 aa).

Residues 30 to 33, 86 to 89, and 99 to 104 contribute to the substrate site; these read TGST, DGAD, and KGMGGA. Glu-108 serves as the catalytic Proton acceptor. Lys-126 contacts substrate.

The protein belongs to the ribose 5-phosphate isomerase family. In terms of assembly, homodimer.

The catalysed reaction is aldehydo-D-ribose 5-phosphate = D-ribulose 5-phosphate. Its pathway is carbohydrate degradation; pentose phosphate pathway; D-ribose 5-phosphate from D-ribulose 5-phosphate (non-oxidative stage): step 1/1. Its function is as follows. Involved in the first step of the non-oxidative branch of the pentose phosphate pathway. It catalyzes the reversible conversion of ribose-5-phosphate to ribulose 5-phosphate. Can also act on D-ribose-5-diphosphate and D-ribose-5-triphosphate as substrate. The polypeptide is Ribose-5-phosphate isomerase A (Thermus thermophilus (strain ATCC BAA-163 / DSM 7039 / HB27)).